We begin with the raw amino-acid sequence, 82 residues long: Omega-conotoxin-like 9 (82 aa).

Positions 1 to 22 (MKLTCMMIAAVLFLTTWTFVTA) are cleaved as a signal peptide. The propeptide occupies 23–51 (DDSRYGLKNLFPKARHEMKNPEASKLNKR). Intrachain disulfides connect Cys54/Cys69, Cys61/Cys73, and Cys68/Cys77.

This sequence belongs to the conotoxin O1 superfamily. Expressed by the venom duct.

The protein resides in the secreted. Functionally, omega-conotoxins act at presynaptic membranes, they bind and block voltage-gated calcium channels (Cav). The protein is Omega-conotoxin-like 9 of Conus striatus (Striated cone).